Consider the following 254-residue polypeptide: 5-oxoprolinase subunit A (254 aa).

It belongs to the LamB/PxpA family. Forms a complex composed of PxpA, PxpB and PxpC.

The enzyme catalyses 5-oxo-L-proline + ATP + 2 H2O = L-glutamate + ADP + phosphate + H(+). Functionally, catalyzes the cleavage of 5-oxoproline to form L-glutamate coupled to the hydrolysis of ATP to ADP and inorganic phosphate. This chain is 5-oxoprolinase subunit A, found in Carboxydothermus hydrogenoformans (strain ATCC BAA-161 / DSM 6008 / Z-2901).